Consider the following 273-residue polypeptide: Formamidopyrimidine-DNA glycosylase (273 aa).

The Schiff-base intermediate with DNA role is filled by P2. Catalysis depends on E3, which acts as the Proton donor. Residue K58 is the Proton donor; for beta-elimination activity of the active site. DNA contacts are provided by H92, R111, and K153. The segment at 238–272 (MVYARDGQECLSCSSSIIKTKHSGRSTFYCKSCQK) adopts an FPG-type zinc-finger fold. R262 acts as the Proton donor; for delta-elimination activity in catalysis.

Belongs to the FPG family. Monomer. It depends on Zn(2+) as a cofactor.

It carries out the reaction Hydrolysis of DNA containing ring-opened 7-methylguanine residues, releasing 2,6-diamino-4-hydroxy-5-(N-methyl)formamidopyrimidine.. The enzyme catalyses 2'-deoxyribonucleotide-(2'-deoxyribose 5'-phosphate)-2'-deoxyribonucleotide-DNA = a 3'-end 2'-deoxyribonucleotide-(2,3-dehydro-2,3-deoxyribose 5'-phosphate)-DNA + a 5'-end 5'-phospho-2'-deoxyribonucleoside-DNA + H(+). Involved in base excision repair of DNA damaged by oxidation or by mutagenic agents. Acts as a DNA glycosylase that recognizes and removes damaged bases. Has a preference for oxidized purines, such as 7,8-dihydro-8-oxoguanine (8-oxoG). Has AP (apurinic/apyrimidinic) lyase activity and introduces nicks in the DNA strand. Cleaves the DNA backbone by beta-delta elimination to generate a single-strand break at the site of the removed base with both 3'- and 5'-phosphates. The protein is Formamidopyrimidine-DNA glycosylase of Rickettsia bellii (strain OSU 85-389).